We begin with the raw amino-acid sequence, 183 residues long: Ribosome-recycling factor (183 aa).

This sequence belongs to the RRF family.

The protein resides in the cytoplasm. In terms of biological role, responsible for the release of ribosomes from messenger RNA at the termination of protein biosynthesis. May increase the efficiency of translation by recycling ribosomes from one round of translation to another. This is Ribosome-recycling factor from Mycoplasma genitalium (strain ATCC 33530 / DSM 19775 / NCTC 10195 / G37) (Mycoplasmoides genitalium).